Consider the following 315-residue polypeptide: Ribosomal RNA small subunit methyltransferase H (315 aa).

S-adenosyl-L-methionine contacts are provided by residues 35–37, Asp55, Phe79, Asp101, and Gln108; that span reads GGH.

The protein belongs to the methyltransferase superfamily. RsmH family.

The protein localises to the cytoplasm. The enzyme catalyses cytidine(1402) in 16S rRNA + S-adenosyl-L-methionine = N(4)-methylcytidine(1402) in 16S rRNA + S-adenosyl-L-homocysteine + H(+). Specifically methylates the N4 position of cytidine in position 1402 (C1402) of 16S rRNA. The polypeptide is Ribosomal RNA small subunit methyltransferase H (Sodalis glossinidius (strain morsitans)).